The primary structure comprises 345 residues: Short-wave-sensitive opsin 1 (345 aa).

Residues 1–30 (MSEEEFYLFKNISSVGPWDGPQYHIAPVWA) lie on the Extracellular side of the membrane. The N-linked (GlcNAc...) asparagine glycan is linked to Asn-11. Residues 31–55 (FYLQAAFMGTVFLIGFPLNAMVLVA) form a helical membrane-spanning segment. At 56–67 (TLRYKKLRQPLN) the chain is on the cytoplasmic side. A helical membrane pass occupies residues 68–93 (YILVNVSFGGFLLCIFSVFPVFVASC). Over 94–107 (NGYFVFGRHVCALE) the chain is Extracellular. Cys-104 and Cys-181 form a disulfide bridge. Residues 108–127 (GFLGTVAGLVTGWSLAFLAF) traverse the membrane as a helical segment. Residues 128 to 146 (ERYIVICKPFGNFRFSSKH) are Cytoplasmic-facing. Residues 147–170 (ALTVVLATWTIGIGVSIPPFFGWS) traverse the membrane as a helical segment. The Extracellular portion of the chain corresponds to 171-196 (RFIPEGLQCSCGPDWYTVGTKYRSES). Residues 197-224 (YTWFLFIFCFIVPLSLICFSYTQLLRAL) traverse the membrane as a helical segment. The Cytoplasmic portion of the chain corresponds to 225–246 (KAVAAQQQESATTQKAEREVSR). The chain crosses the membrane as a helical span at residues 247-270 (MVVVMVGSFCVCYVPYAAFAMYMV). The Extracellular portion of the chain corresponds to 271-278 (NNRNHGLD). Residues 279-303 (LRLVTIPSFFSKSACIYNPIIYCFM) traverse the membrane as a helical segment. Position 290 is an N6-(retinylidene)lysine (Lys-290). The Cytoplasmic segment spans residues 304–345 (NKQFQACIMKMVCGKAMTDESDTCSSQKTEVSTVSSTQVGPN).

The protein belongs to the G-protein coupled receptor 1 family. Opsin subfamily. Phosphorylated on some or all of the serine and threonine residues present in the C-terminal region. In terms of tissue distribution, the three color pigments are found in the cone photoreceptor cells. Expressed throughout the epidermis and dermis, primarily in the stratum granulosum in the facial and abdominal skin (at protein level). Expressed in dermal fibroblasts (at protein level). Expressed in melanocytes (at protein level).

The protein resides in the cell membrane. It localises to the photoreceptor inner segment. Its subcellular location is the cell projection. It is found in the cilium. The protein localises to the photoreceptor outer segment. The protein resides in the cytoplasm. It localises to the perinuclear region. Its function is as follows. Visual pigments are the light-absorbing molecules that mediate vision. They consist of an apoprotein, opsin, covalently linked to cis-retinal. Required for the maintenance of cone outer segment organization in the ventral retina, but not essential for the maintenance of functioning cone photoreceptors. Involved in ensuring correct abundance and localization of retinal membrane proteins. May increase spectral sensitivity in dim light. The protein is Short-wave-sensitive opsin 1 (OPN1SW) of Homo sapiens (Human).